Here is a 281-residue protein sequence, read N- to C-terminus: Large ribosomal subunit protein uL2 (281 aa).

The tract at residues 220–281 (VRGSVMNPND…RRRDGKALSK (62 aa)) is disordered. The segment covering 258 to 271 (KTRKKNKQSNKMIM) has biased composition (basic residues). Over residues 272–281 (RRRDGKALSK) the composition is skewed to basic and acidic residues.

This sequence belongs to the universal ribosomal protein uL2 family. As to quaternary structure, part of the 50S ribosomal subunit. Forms a bridge to the 30S subunit in the 70S ribosome.

Its function is as follows. One of the primary rRNA binding proteins. Required for association of the 30S and 50S subunits to form the 70S ribosome, for tRNA binding and peptide bond formation. It has been suggested to have peptidyltransferase activity; this is somewhat controversial. Makes several contacts with the 16S rRNA in the 70S ribosome. The sequence is that of Large ribosomal subunit protein uL2 from Lachnoclostridium phytofermentans (strain ATCC 700394 / DSM 18823 / ISDg) (Clostridium phytofermentans).